The primary structure comprises 436 residues: UDP-N-acetylmuramate--L-alanine ligase (436 aa).

Gly108–Ser114 is an ATP binding site.

This sequence belongs to the MurCDEF family.

Its subcellular location is the cytoplasm. It catalyses the reaction UDP-N-acetyl-alpha-D-muramate + L-alanine + ATP = UDP-N-acetyl-alpha-D-muramoyl-L-alanine + ADP + phosphate + H(+). It participates in cell wall biogenesis; peptidoglycan biosynthesis. Its function is as follows. Cell wall formation. The polypeptide is UDP-N-acetylmuramate--L-alanine ligase (Bacillus cereus (strain Q1)).